We begin with the raw amino-acid sequence, 864 residues long: Disintegrin and metalloproteinase domain-containing protein 15 (864 aa).

Residues 1-17 (MRLALLWALGLLGAGSP) form the signal peptide. The interval 17 to 49 (PRPSPPLPNIGGTEEEQQASPERTQSRSLENQV) is disordered. A propeptide spanning residues 18–208 (RPSPPLPNIG…EQHHLRRLKR (191 aa)) is cleaved from the precursor. Residues 34 to 49 (QASPERTQSRSLENQV) are compositionally biased toward polar residues. The N-linked (GlcNAc...) asparagine glycan is linked to asparagine 57. The Cysteine switch motif lies at 178–185 (HTCAPSWH). Cysteine 180 contacts Zn(2+). The Extracellular portion of the chain corresponds to 209 to 698 (DVVTETKIVE…QLRATSSLTT (490 aa)). One can recognise a Peptidase M12B domain in the interval 215-416 (KIVELVIVAD…GMGSCLFEWP (202 aa)). The N-linked (GlcNAc...) asparagine glycan is linked to asparagine 239. Disulfide bonds link cysteine 325–cysteine 411, cysteine 367–cysteine 395, cysteine 369–cysteine 378, and cysteine 482–cysteine 502. Residue histidine 350 coordinates Zn(2+). Glutamate 351 is a catalytic residue. Residues histidine 354 and histidine 360 each contribute to the Zn(2+) site. N-linked (GlcNAc...) asparagine glycans are attached at residues asparagine 391 and asparagine 394. The Disintegrin domain maps to 423-510 (SSLCGNMFVD…QCPPDIRLGD (88 aa)). Residues asparagine 608 and asparagine 613 are each glycosylated (N-linked (GlcNAc...) asparagine). 3 cysteine pairs are disulfide-bonded: cysteine 659/cysteine 669, cysteine 663/cysteine 675, and cysteine 677/cysteine 686. The EGF-like domain maps to 659–687 (CRSKCHGHGVCDSSRHCHCDEGWAPPDCM). The chain crosses the membrane as a helical span at residues 699 to 719 (GLLLSLLLLLVLVLLGASYWY). Phosphotyrosine; by HCK and LCK occurs at positions 717 and 737. Residues 720–864 (RARLHQRLCQ…PPPAASSLYL (145 aa)) are Cytoplasmic-facing. The disordered stretch occupies residues 738–864 (RAAQSGPPER…PPPAASSLYL (127 aa)). A compositionally biased stretch (polar residues) spans 753-765 (RAQQMPGTKQANV). Pro residues-rich tracts occupy residues 768-780 (PVPP…PNPV) and 810-825 (PQGP…PLPA). An SH3-binding motif is present at residues 816–822 (PPPPRKP). Over residues 826 to 850 (NPQGRPPLGDLPGPGDGSLQLVVPS) the composition is skewed to low complexity. Positions 851–857 (RPAPPPP) match the SH3-binding motif.

Interacts with ITAGV-ITGB3 (vitronectin receptor). Interacts with SH3GL2 and SNX9; this interaction occurs preferentially with ADAM15 precursor, rather than the processed form, suggesting it occurs in a secretory pathway compartment prior to the medial Golgi. Interacts with ITAG9-ITGB1. Interacts specifically with Src family protein-tyrosine kinases (PTKs). Interacts with SH3PXD2A. Interacts with ITAGV-ITGB1. Interacts with GRB2, HCK, ITSN1, ITSN2, LYN, MAPK1, MAPK3, NCF1, NCK1, nephrocystin, PTK6, SNX33, LCK and SRC. The cofactor is Zn(2+). The precursor is cleaved by a furin endopeptidase. In terms of processing, phosphorylation increases association with PTKs. Predominantly expressed in brain, spinal cord, sciatic nerve and lung. Expressed at lower levels in all other tissues. In the peripheral nervous system, expressed predominantly by Schwann cells. In the central nervous system, preferentially expressed by neuronal cells.

The protein localises to the endomembrane system. The protein resides in the cell junction. It is found in the adherens junction. It localises to the cell projection. Its subcellular location is the cilium. The protein localises to the flagellum. The protein resides in the cytoplasmic vesicle. It is found in the secretory vesicle. It localises to the acrosome. Active metalloproteinase with gelatinolytic and collagenolytic activity. Plays a role in the wound healing process. Mediates both heterotypic intraepithelial cell/T-cell interactions and homotypic T-cell aggregation. Inhibits beta-1 integrin-mediated cell adhesion and migration of airway smooth muscle cells. Suppresses cell motility on or towards fibronectin possibly by driving alpha-v/beta-1 integrin (ITAGV-ITGB1) cell surface expression via ERK1/2 inactivation. Cleaves E-cadherin in response to growth factor deprivation. Plays a role in glomerular cell migration. Plays a role in pathological neovascularization. May play a role in cartilage remodeling. May be proteolytically processed, during sperm epididymal maturation and the acrosome reaction. May play a role in sperm-egg binding through its disintegrin domain. The sequence is that of Disintegrin and metalloproteinase domain-containing protein 15 (Adam15) from Rattus norvegicus (Rat).